The following is a 129-amino-acid chain: UPF0102 protein Cag_1992 (129 aa).

This sequence belongs to the UPF0102 family.

The polypeptide is UPF0102 protein Cag_1992 (Chlorobium chlorochromatii (strain CaD3)).